A 336-amino-acid polypeptide reads, in one-letter code: Ornithine carbamoyltransferase, catabolic (336 aa).

Carbamoyl phosphate-binding positions include S62–T65, Q89, R113, and H140–Q143. L-ornithine contacts are provided by residues N172, D236, and S240 to M241. Residues C277 to L278 and R322 contribute to the carbamoyl phosphate site.

It belongs to the aspartate/ornithine carbamoyltransferase superfamily. OTCase family.

The protein resides in the cytoplasm. The catalysed reaction is carbamoyl phosphate + L-ornithine = L-citrulline + phosphate + H(+). It participates in amino-acid degradation; L-arginine degradation via ADI pathway; carbamoyl phosphate from L-arginine: step 2/2. Functionally, reversibly catalyzes the transfer of the carbamoyl group from carbamoyl phosphate (CP) to the N(epsilon) atom of ornithine (ORN) to produce L-citrulline. The polypeptide is Ornithine carbamoyltransferase, catabolic (Staphylococcus aureus (strain MRSA252)).